Consider the following 613-residue polypeptide: ATP-dependent RNA helicase DeaD (613 aa).

The Q motif motif lies at I5–Q33. A Helicase ATP-binding domain is found at I36 to V207. A49–T56 contacts ATP. The DEAD box signature appears at D155–D158. The Helicase C-terminal domain maps to K231–L378. Disordered regions lie at residues I434–M476 and A552–F613. 2 stretches are compositionally biased toward basic and acidic residues: residues P440 to G469 and D556 to F613.

The protein belongs to the DEAD box helicase family. DeaD/CsdA subfamily.

The protein localises to the cytoplasm. It carries out the reaction ATP + H2O = ADP + phosphate + H(+). Functionally, DEAD-box RNA helicase involved in various cellular processes at low temperature, including ribosome biogenesis, mRNA degradation and translation initiation. The polypeptide is ATP-dependent RNA helicase DeaD (Haemophilus influenzae (strain ATCC 51907 / DSM 11121 / KW20 / Rd)).